Here is a 340-residue protein sequence, read N- to C-terminus: CMP-N-acetylneuraminate-beta-galactosamide-alpha-2,3-sialyltransferase 1 (340 aa).

At 1 to 13 (MVTLRKRTLKVLT) the chain is on the cytoplasmic side. The helical; Signal-anchor for type II membrane protein transmembrane segment at 14–34 (FLVLFIFLTSFFLNYSHTMVA) threads the bilayer. Residues 35–340 (TTWFPKQMVL…INKIRIFKGR (306 aa)) are Lumenal-facing. Disulfide bonds link Cys59-Cys64, Cys61-Cys139, and Cys142-Cys281. Asn79 carries an N-linked (GlcNAc...) asparagine glycan. Position 105 (Gln105) interacts with substrate. Asn114 is a glycosylation site (N-linked (GlcNAc...) asparagine). 2 residues coordinate substrate: Asn147 and Asn170. Asn201 carries an N-linked (GlcNAc...) asparagine glycan. Residues Tyr230, Tyr266, Gly270, Gly290, His299, and His316 each coordinate substrate. Asn323 carries an N-linked (GlcNAc...) asparagine glycan.

It belongs to the glycosyltransferase 29 family. In terms of processing, the soluble form derives from the membrane form by proteolytic processing. As to expression, expressed in several tissues. Highest expression in lung, liver, skeletal muscle, kidney, pancreas, spleen and placenta.

The protein resides in the golgi apparatus. It localises to the golgi stack membrane. Its subcellular location is the trans-Golgi network membrane. The protein localises to the secreted. It carries out the reaction a beta-D-galactosyl-(1-&gt;3)-N-acetyl-alpha-D-galactosaminyl derivative + CMP-N-acetyl-beta-neuraminate = an N-acetyl-alpha-neuraminyl-(2-&gt;3)-beta-D-galactosyl-(1-&gt;3)-N-acetyl-alpha-D-galactosaminyl derivative + CMP + H(+). The enzyme catalyses a ganglioside GM1 + CMP-N-acetyl-beta-neuraminate = a ganglioside GD1a + CMP + H(+). The catalysed reaction is a ganglioside GM1 (d18:1(4E)) + CMP-N-acetyl-beta-neuraminate = a ganglioside GD1a (d18:1(4E)) + CMP + H(+). It catalyses the reaction ganglioside GM1 (d18:1(4E)/18:0) + CMP-N-acetyl-beta-neuraminate = ganglioside GD1a (18:1(4E)/18:0) + CMP + H(+). It carries out the reaction a ganglioside GA1 + CMP-N-acetyl-beta-neuraminate = a ganglioside GM1b + CMP + H(+). The enzyme catalyses a ganglioside GA1 (d18:1(4E)) + CMP-N-acetyl-beta-neuraminate = a ganglioside GM1b (d18:1(4E)) + CMP + H(+). The catalysed reaction is a ganglioside GD1b + CMP-N-acetyl-beta-neuraminate = a ganglioside GT1b + CMP + H(+). It catalyses the reaction a 3-O-[beta-D-galactosyl-(1-&gt;3)-N-acetyl-alpha-D-galactosaminyl]-L-threonyl-[protein] + CMP-N-acetyl-beta-neuraminate = a 3-O-[N-acetyl-alpha-neuraminyl-(2-&gt;3)-beta-D-galactosyl-(1-&gt;3)-N-acetyl-alpha-D-galactosaminyl]-L-threonyl-[protein] + CMP + H(+). It carries out the reaction a 3-O-[beta-D-galactosyl-(1-&gt;3)-N-acetyl-alpha-D-galactosaminyl]-L-seryl-[protein] + CMP-N-acetyl-beta-neuraminate = 3-O-[N-acetyl-alpha-neuraminyl-(2-&gt;3)-beta-D-galactosyl-(1-&gt;3)-N-acetyl-alpha-D-galactosaminyl]-L-seryl-[protein] + CMP + H(+). Its pathway is protein modification; protein glycosylation. It functions in the pathway glycolipid biosynthesis. Functionally, a beta-galactoside alpha2-&gt;3 sialyltransferase involved in terminal sialylation of glycoproteins and glycolipids. Catalyzes the transfer of sialic acid (N-acetyl-neuraminic acid; Neu5Ac) from the nucleotide sugar donor CMP-Neu5Ac onto acceptor Galbeta-(1-&gt;3)-GalNAc-terminated glycoconjugates through an alpha2-3 linkage. Adds sialic acid to the core 1 O-glycan, Galbeta-(1-&gt;3)-GalNAc-O-Ser/Thr, which is a major structure of mucin-type O-glycans. As part of a homeostatic mechanism that regulates CD8-positive T cell numbers, sialylates core 1 O-glycans of T cell glycoproteins, SPN/CD43 and PTPRC/CD45. Prevents premature apoptosis of thymic CD8-positive T cells prior to peripheral emigration, whereas in the secondary lymphoid organs controls the survival of CD8-positive memory T cells generated following a successful immune response. Transfers sialic acid to asialofetuin, presumably onto Galbeta-(1-&gt;3)-GalNAc-O-Ser. Sialylates GM1a, GA1 and GD1b gangliosides to form GD1a, GM1b and GT1b, respectively. This chain is CMP-N-acetylneuraminate-beta-galactosamide-alpha-2,3-sialyltransferase 1, found in Homo sapiens (Human).